We begin with the raw amino-acid sequence, 135 residues long: U-scoloptoxin(22)-Er1a (135 aa).

The signal sequence occupies residues 1–24; the sequence is MAVILKHLAIILLVFVIEIKMGQG. Residues 61-135 are disordered; the sequence is PQITFSTDWG…RSPRYLPTII (75 aa). Positions 75–127 are enriched in basic and acidic residues; that stretch reads SVNEDREAAERERSPQMKRSEHEEQLMAKDEMKRFQEERNPSSDDKIAIDKRS.

The protein belongs to the scoloptoxin-22 family. Expressed by the venom gland.

Its subcellular location is the secreted. The sequence is that of U-scoloptoxin(22)-Er1a from Ethmostigmus rubripes (Giant centipede).